A 409-amino-acid polypeptide reads, in one-letter code: Elongation factor Tu (409 aa).

The 205-residue stretch at 10 to 214 (KPHVNIGTIG…AVDAYIPTPE (205 aa)) folds into the tr-type G domain. The tract at residues 19–26 (GHVDHGKT) is G1. 19–26 (GHVDHGKT) lines the GTP pocket. Position 26 (Thr26) interacts with Mg(2+). The tract at residues 60 to 64 (GITIN) is G2. A G3 region spans residues 81 to 84 (DCPG). Residues 81-85 (DCPGH) and 136-139 (NKKD) contribute to the GTP site. A G4 region spans residues 136–139 (NKKD). The segment at 174–176 (SAL) is G5.

It belongs to the TRAFAC class translation factor GTPase superfamily. Classic translation factor GTPase family. EF-Tu/EF-1A subfamily. Monomer.

The protein resides in the cytoplasm. It carries out the reaction GTP + H2O = GDP + phosphate + H(+). Functionally, GTP hydrolase that promotes the GTP-dependent binding of aminoacyl-tRNA to the A-site of ribosomes during protein biosynthesis. This chain is Elongation factor Tu, found in Gloeobacter violaceus (strain ATCC 29082 / PCC 7421).